The primary structure comprises 71 residues: MPVIKLRENEPFDVALRRFKRSCEKAGILAETRKREFFEKPTTVRKRAKAAAVKRHLKKLSRENARRVRLY.

Belongs to the bacterial ribosomal protein bS21 family.

The protein is Small ribosomal subunit protein bS21 of Psychromonas ingrahamii (strain DSM 17664 / CCUG 51855 / 37).